The following is a 680-amino-acid chain: MGQYLAALYSQIYGLCLDVSLVEFCKPTSLCLTKIADACNKVHKIHEYVSASLLQQNSLEACALSLELSHLLENLKTRLFFIYHALLDNPTYFSKLHSSVGLCDLHKKLNVQFYNECGIEVNLTLINDIERFLSRLNCVFYCLSSSSALLALKEALTFLGQLRGISPVPRTDIYITSSSCLECVLETSVVPNQGETLNELLLNHNCHHLVERVPPEPIKGLFESELQNLGLKVHIATDTIEQSVGKHEAVLQESLAYLKAHTIFNNTPKQVLELSNLLYWNSGQNQPSDSGVKCSELSKIWSRENELQKYRPKLNNGEPPGHFFDLHSPQGTELLFCGGIFSSTHDTITALKQDCSNTFMKQTRLTGVAKRQNELFMRLSNILYGEEVPTKPKQTESALKTCDQSDASKNQVLQEAELRKEAYLNKLSKEGFRKLQACLSTHEEMLNSQLSLKIWGSVVYKQSATLLNHFLFRQSWVTQASLPPSVNGSPEQFENSKFIKSSLYVKSLSREYLSTLRLHFFALITGPLTTQEGLFPSPPNVQLAHCLEAAHFMPHQKMLLNEMIKPTMEPQDWICSNFNEFYTIHETDLNGVQYECWKYLRELVLSVALYNITWEKNLCIYRTDHSCPTACSSGIKEGLYVTYESHAPLILVYSNKKWIFKDLYALLYAHMQLANNGAHR.

The segment at 180–208 (CLECVLETSVVPNQGETLNELLLNHNCHH) adopts a C3H1-type zinc-finger fold. ATP is bound at residue 610–617 (YNITWEKN).

The protein belongs to the herpesviridae TRM1 protein family. In terms of assembly, associates with TRM2 and TRM3 to form the tripartite terminase complex. Interacts with portal protein.

The protein localises to the host nucleus. Component of the molecular motor that translocates viral genomic DNA in empty capsid during DNA packaging. Forms a tripartite terminase complex together with TRM2 and TRM3 in the host cytoplasm. Once the complex reaches the host nucleus, it interacts with the capsid portal vertex. This portal forms a ring in which genomic DNA is translocated into the capsid. TRM1 carries an endonuclease activity that plays an important role for the cleavage of concatemeric viral DNA into unit length genomes. The protein is Tripartite terminase subunit 1 of Alcelaphine herpesvirus 1 (strain C500) (AlHV-1).